We begin with the raw amino-acid sequence, 224 residues long: Small ribosomal subunit protein uS3 (224 aa).

One can recognise a KH type-2 domain in the interval 39–107; sequence IREFLKKKPS…DVWVEIAEVK (69 aa).

Belongs to the universal ribosomal protein uS3 family. Part of the 30S ribosomal subunit. Forms a tight complex with proteins S10 and S14.

Binds the lower part of the 30S subunit head. Binds mRNA in the 70S ribosome, positioning it for translation. In Chlamydia trachomatis serovar D (strain ATCC VR-885 / DSM 19411 / UW-3/Cx), this protein is Small ribosomal subunit protein uS3.